A 397-amino-acid polypeptide reads, in one-letter code: Enoyl-[acyl-carrier-protein] reductase [NADH] (397 aa).

NAD(+) is bound by residues 48-53 (GASTGY), 74-75 (FE), 111-112 (DA), and 139-140 (LA). Tyr224 provides a ligand contact to substrate. Tyr234 serves as the catalytic Proton donor. Residues Lys243 and 272-274 (VVT) contribute to the NAD(+) site.

This sequence belongs to the TER reductase family. As to quaternary structure, monomer.

The enzyme catalyses a 2,3-saturated acyl-[ACP] + NAD(+) = a (2E)-enoyl-[ACP] + NADH + H(+). The protein operates within lipid metabolism; fatty acid biosynthesis. Functionally, involved in the final reduction of the elongation cycle of fatty acid synthesis (FAS II). Catalyzes the reduction of a carbon-carbon double bond in an enoyl moiety that is covalently linked to an acyl carrier protein (ACP). This is Enoyl-[acyl-carrier-protein] reductase [NADH] from Pseudomonas fluorescens (strain SBW25).